The sequence spans 170 residues: Cyclic pyranopterin monophosphate synthase (170 aa).

Residues 1–25 (MADPSTLTHPDPEGGVRMMDASQKS) are disordered. Substrate-binding positions include 78 to 80 (LCH) and 116 to 117 (ME). Asp131 is a catalytic residue.

This sequence belongs to the MoaC family. As to quaternary structure, homohexamer; trimer of dimers.

It carries out the reaction (8S)-3',8-cyclo-7,8-dihydroguanosine 5'-triphosphate = cyclic pyranopterin phosphate + diphosphate. It functions in the pathway cofactor biosynthesis; molybdopterin biosynthesis. In terms of biological role, catalyzes the conversion of (8S)-3',8-cyclo-7,8-dihydroguanosine 5'-triphosphate to cyclic pyranopterin monophosphate (cPMP). The sequence is that of Cyclic pyranopterin monophosphate synthase from Salinibacter ruber (strain DSM 13855 / M31).